A 414-amino-acid polypeptide reads, in one-letter code: xyloglucan O-acetyltransferase 2 (414 aa).

The Cytoplasmic segment spans residues 1–26 (MKSSSSIFRETSEKKSERWMMMNIGR). A helical; Signal-anchor for type II membrane protein membrane pass occupies residues 27–47 (FSPFFLSSFCITLFFTGFFVY). Residues 48–414 (QNPFKSIADQ…FLMAIIRQLR (367 aa)) are Lumenal-facing. 4 disulfides stabilise this stretch: C70-C120, C91-C156, C100-C394, and C317-C390. N88 carries an N-linked (GlcNAc...) asparagine glycan. Residues 143–145 (GDS) carry the GDS motif motif. S145 acts as the Nucleophile in catalysis. N-linked (GlcNAc...) asparagine glycosylation is found at N205, N263, and N308. The active-site Proton donor is the D389. A DXXH motif motif is present at residues 389–392 (DCVH). The Proton acceptor role is filled by H392.

It belongs to the PC-esterase family. TBL subfamily.

It localises to the membrane. In terms of biological role, xyloglucan acetyltransferase that catalyzes the acetylation of fucosylated Gal residues on xyloglucan side chains. Predominantly catalyze 6-O-monoacetylation of Gal residues in the Fuc-Gal-Xyl trisaccharide side chains of xyloglucan oligomers. Involved in xyloglucan specific O-acetylation in seeds. In Arabidopsis thaliana (Mouse-ear cress), this protein is xyloglucan O-acetyltransferase 2.